The primary structure comprises 160 residues: 6,7-dimethyl-8-ribityllumazine synthase (160 aa).

Residues W26, 59–61, and 81–83 contribute to the 5-amino-6-(D-ribitylamino)uracil site; these read AVE and VVI. Residue 86 to 87 participates in (2S)-2-hydroxy-3-oxobutyl phosphate binding; that stretch reads GT. The active-site Proton donor is H89. F114 serves as a coordination point for 5-amino-6-(D-ribitylamino)uracil. Residue R128 participates in (2S)-2-hydroxy-3-oxobutyl phosphate binding.

The protein belongs to the DMRL synthase family.

The catalysed reaction is (2S)-2-hydroxy-3-oxobutyl phosphate + 5-amino-6-(D-ribitylamino)uracil = 6,7-dimethyl-8-(1-D-ribityl)lumazine + phosphate + 2 H2O + H(+). Its pathway is cofactor biosynthesis; riboflavin biosynthesis; riboflavin from 2-hydroxy-3-oxobutyl phosphate and 5-amino-6-(D-ribitylamino)uracil: step 1/2. In terms of biological role, catalyzes the formation of 6,7-dimethyl-8-ribityllumazine by condensation of 5-amino-6-(D-ribitylamino)uracil with 3,4-dihydroxy-2-butanone 4-phosphate. This is the penultimate step in the biosynthesis of riboflavin. The polypeptide is 6,7-dimethyl-8-ribityllumazine synthase (Frankia casuarinae (strain DSM 45818 / CECT 9043 / HFP020203 / CcI3)).